A 136-amino-acid chain; its full sequence is Large ribosomal subunit protein uL16 (136 aa).

This sequence belongs to the universal ribosomal protein uL16 family. As to quaternary structure, part of the 50S ribosomal subunit.

In terms of biological role, binds 23S rRNA and is also seen to make contacts with the A and possibly P site tRNAs. This chain is Large ribosomal subunit protein uL16, found in Actinobacillus succinogenes (strain ATCC 55618 / DSM 22257 / CCUG 43843 / 130Z).